We begin with the raw amino-acid sequence, 267 residues long: X-box-binding protein 1 (267 aa).

Residues Met-1–Asn-180 lie on the Cytoplasmic side of the membrane. The segment at Val-35–Leu-60 is disordered. Ser-61 carries the phosphoserine modification. In terms of domain architecture, bZIP spans Glu-63–Leu-126. Residues Lys-65–Arg-87 form a basic motif region. Positions Arg-69–Lys-85 are nuclear localization signal (NLS). The tract at residues Leu-91–Leu-126 is leucine-zipper. Residues Ile-181–Ser-198 form a helical; Signal-anchor for type II membrane protein membrane-spanning segment. The Lumenal segment spans residues Phe-199–Leu-267.

This sequence belongs to the bZIP family. As to quaternary structure, isoform 1 interacts with HM13. Isoform 1 interacts with RNF139; the interaction induces ubiquitination and degradation of isoform 1. Isoform 1 interacts (via luminal domain) with DERL1; the interaction obviates the need for ectodomain shedding prior HM13/SPP-mediated XBP1 isoform 1 cleavage. Isoform 1 interacts with HDAC3 and AKT1; the interactions occur in endothelial cell (EC) under disturbed flow. Isoform 1 interacts with the oncoprotein FOS. Interacts with SIRT1. Post-translationally, isoform 1 is ubiquitinated, leading to proteasome-mediated degradation in response to ER stress. X-box-binding protein 1, cytoplasmic form and luminal form are produced by intramembrane proteolytic cleavage of ER membrane-anchored isoform 1 triggered by HM13/SPP in a DERL1-RNF139-dependent and VCP/p97-independent manner. X-box-binding protein 1, luminal form is ubiquitinated leading to proteasomal degradation. In terms of processing, acetylated by EP300; acetylation positively regulates the transcriptional activity of XBP1. Deacetylated by SIRT1; deacetylation negatively regulates the transcriptional activity of XBP1.

It localises to the nucleus. The protein localises to the endoplasmic reticulum. It is found in the cytoplasm. The protein resides in the endoplasmic reticulum membrane. Its subcellular location is the membrane. Functions as a transcription factor during endoplasmic reticulum (ER) stress by regulating the unfolded protein response (UPR). Required for cardiac myogenesis and hepatogenesis during embryonic development, and the development of secretory tissues such as exocrine pancreas and salivary gland. Involved in terminal differentiation of B lymphocytes to plasma cells and production of immunoglobulins. Modulates the cellular response to ER stress in a PIK3R-dependent manner. Binds to the cis-acting X box present in the promoter regions of major histocompatibility complex class II genes. Involved in VEGF-induced endothelial cell (EC) proliferation and retinal blood vessel formation during embryonic development but also for angiogenesis in adult tissues under ischemic conditions. Functions also as a major regulator of the UPR in obesity-induced insulin resistance and type 2 diabetes for the management of obesity and diabetes prevention. Functionally, acts as a weak transcriptional factor. Together with HDAC3, contributes to the activation of NFE2L2-mediated HMOX1 transcription factor gene expression in a PI(3)K/mTORC2/Akt-dependent signaling pathway leading to EC survival under disturbed flow/oxidative stress. Binds to the ER stress response element (ERSE) upon ER stress. Binds to the consensus 5'-GATGACGTG[TG]N(3)[AT]T-3' sequence related to cAMP responsive element (CRE)-like sequences. Associates preferentially to the HDAC3 gene promoter region in a static flow-dependent manner. Binds to the CDH5/VE-cadherin gene promoter region. The polypeptide is X-box-binding protein 1 (Rattus norvegicus (Rat)).